We begin with the raw amino-acid sequence, 314 residues long: DNA-directed RNA polymerase subunit alpha (314 aa).

The tract at residues 1-228 (MIEIEKPRIE…EHLNIFVGLT (228 aa)) is alpha N-terminal domain (alpha-NTD). The segment at 245-314 (KEKVLEMSIE…DLGLGLRKED (70 aa)) is alpha C-terminal domain (alpha-CTD).

The protein belongs to the RNA polymerase alpha chain family. In terms of assembly, homodimer. The RNAP catalytic core consists of 2 alpha, 1 beta, 1 beta' and 1 omega subunit. When a sigma factor is associated with the core the holoenzyme is formed, which can initiate transcription.

The enzyme catalyses RNA(n) + a ribonucleoside 5'-triphosphate = RNA(n+1) + diphosphate. DNA-dependent RNA polymerase catalyzes the transcription of DNA into RNA using the four ribonucleoside triphosphates as substrates. The polypeptide is DNA-directed RNA polymerase subunit alpha (Staphylococcus saprophyticus subsp. saprophyticus (strain ATCC 15305 / DSM 20229 / NCIMB 8711 / NCTC 7292 / S-41)).